A 415-amino-acid chain; its full sequence is Serine hydroxymethyltransferase (415 aa).

(6S)-5,6,7,8-tetrahydrofolate is bound by residues Leu121 and 125-127; that span reads GHL. Lys229 carries the N6-(pyridoxal phosphate)lysine modification. 352–354 is a binding site for (6S)-5,6,7,8-tetrahydrofolate; sequence SPF.

Belongs to the SHMT family. As to quaternary structure, homodimer. The cofactor is pyridoxal 5'-phosphate.

It is found in the cytoplasm. It carries out the reaction (6R)-5,10-methylene-5,6,7,8-tetrahydrofolate + glycine + H2O = (6S)-5,6,7,8-tetrahydrofolate + L-serine. The protein operates within one-carbon metabolism; tetrahydrofolate interconversion. It functions in the pathway amino-acid biosynthesis; glycine biosynthesis; glycine from L-serine: step 1/1. Functionally, catalyzes the reversible interconversion of serine and glycine with tetrahydrofolate (THF) serving as the one-carbon carrier. This reaction serves as the major source of one-carbon groups required for the biosynthesis of purines, thymidylate, methionine, and other important biomolecules. Also exhibits THF-independent aldolase activity toward beta-hydroxyamino acids, producing glycine and aldehydes, via a retro-aldol mechanism. In Methylobacillus flagellatus (strain ATCC 51484 / DSM 6875 / VKM B-1610 / KT), this protein is Serine hydroxymethyltransferase.